Reading from the N-terminus, the 277-residue chain is Large ribosomal subunit protein uL2c (277 aa).

Residues 225–277 (MNPCDHPHGGGEGRSPIGRPKPVTPWGKPALGKKTRSPKRFSNKYIIRSRKMV) form a disordered region. Basic residues predominate over residues 255-277 (LGKKTRSPKRFSNKYIIRSRKMV).

It belongs to the universal ribosomal protein uL2 family. In terms of assembly, part of the 50S ribosomal subunit.

It localises to the plastid. The protein localises to the chloroplast. The polypeptide is Large ribosomal subunit protein uL2c (rpl2) (Euglena gracilis).